Here is a 278-residue protein sequence, read N- to C-terminus: Single-strand selective monofunctional uracil-DNA glycosylase (278 aa).

3 residues coordinate substrate: Met84, Phe98, and Asn163. The interval 173-187 (SGRNLTPADLPAKHR) is DNA-binding. His239 contributes to the substrate binding site.

This sequence belongs to the uracil-DNA glycosylase (UDG) superfamily. SMUG1 family.

It is found in the nucleus. Functionally, recognizes base lesions in the genome and initiates base excision DNA repair. Acts as a monofunctional DNA glycosylase specific for uracil (U) residues in DNA with a preference for single-stranded DNA substrates. The activity is greater toward mismatches (U/G) compared to matches (U/A). Excises uracil (U), 5-formyluracil (fU) and uracil derivatives bearing an oxidized group at C5 [5-hydroxyuracil (hoU) and 5-hydroxymethyluracil (hmU)] in ssDNA and dsDNA, but not analogous cytosine derivatives (5-hydroxycytosine and 5-formylcytosine), nor other oxidized bases. The activity is damage-specific and salt-dependent. The substrate preference is the following: ssDNA &gt; dsDNA (G pair) = dsDNA (A pair) at low salt concentration, and dsDNA (G pair) &gt; dsDNA (A pair) &gt; ssDNA at high salt concentration. The sequence is that of Single-strand selective monofunctional uracil-DNA glycosylase (Smug1) from Rattus norvegicus (Rat).